Reading from the N-terminus, the 145-residue chain is uncharacterized protein (145 aa).

It belongs to the asfivirus K145R family.

The protein localises to the virion. This is an uncharacterized protein from Ornithodoros (relapsing fever ticks).